The following is a 596-amino-acid chain: Heat shock factor protein 5 (596 aa).

A DNA-binding region spans residues 10 to 200; it reads NPNNFPAKLW…FHRSFRRDSL (191 aa). The disordered stretch occupies residues 541–576; that stretch reads EMGPASKPSEDTGLATPARYREHRSNSQQGKSPDLH. Position 572 is a phosphoserine (serine 572).

Belongs to the HSF family. Homooligomer.

The protein localises to the nucleus. It localises to the chromosome. In terms of biological role, DNA-binding transcription factor that is essential for male fertility, spermatogenesis and meiotic prophase progression in spermatocytes under non-stress conditions. Positvely and negatively regulates gene expression to ensure progression of meiotic prophase beyond pachytene stage in spermatocytes. Plays a role in male germline meiotic sex chromosome remodeling and silencing through regulation of SMARCA4. This Homo sapiens (Human) protein is Heat shock factor protein 5 (HSF5).